An 814-amino-acid polypeptide reads, in one-letter code: DNA ligase (814 aa).

NAD(+) contacts are provided by residues 46–50 (DAEYD), 95–96 (SL), and Glu129. Residue Lys131 is the N6-AMP-lysine intermediate of the active site. Positions 152, 189, 305, and 329 each coordinate NAD(+). 4 residues coordinate Zn(2+): Cys434, Cys437, Cys458, and Cys464. A disordered region spans residues 525–548 (LSAQRRSEGEPAPKKPTKKKGEEE). A BRCT domain is found at 735–814 (TSAAAFAGKT…DDWLAMLAEA (80 aa)).

It belongs to the NAD-dependent DNA ligase family. LigA subfamily. Requires Mg(2+) as cofactor. Mn(2+) is required as a cofactor.

It carries out the reaction NAD(+) + (deoxyribonucleotide)n-3'-hydroxyl + 5'-phospho-(deoxyribonucleotide)m = (deoxyribonucleotide)n+m + AMP + beta-nicotinamide D-nucleotide.. DNA ligase that catalyzes the formation of phosphodiester linkages between 5'-phosphoryl and 3'-hydroxyl groups in double-stranded DNA using NAD as a coenzyme and as the energy source for the reaction. It is essential for DNA replication and repair of damaged DNA. In Methylorubrum extorquens (strain PA1) (Methylobacterium extorquens), this protein is DNA ligase.